The sequence spans 275 residues: 4-hydroxy-tetrahydrodipicolinate reductase (275 aa).

NAD(+) is bound by residues 13–18 (GAAGKM), 108–110 (GTT), and 134–137 (APNF). H164 (proton donor/acceptor) is an active-site residue. Residue H165 coordinates (S)-2,3,4,5-tetrahydrodipicolinate. K168 functions as the Proton donor in the catalytic mechanism. 174–175 (GT) is a (S)-2,3,4,5-tetrahydrodipicolinate binding site.

The protein belongs to the DapB family.

It localises to the cytoplasm. It carries out the reaction (S)-2,3,4,5-tetrahydrodipicolinate + NAD(+) + H2O = (2S,4S)-4-hydroxy-2,3,4,5-tetrahydrodipicolinate + NADH + H(+). The catalysed reaction is (S)-2,3,4,5-tetrahydrodipicolinate + NADP(+) + H2O = (2S,4S)-4-hydroxy-2,3,4,5-tetrahydrodipicolinate + NADPH + H(+). It participates in amino-acid biosynthesis; L-lysine biosynthesis via DAP pathway; (S)-tetrahydrodipicolinate from L-aspartate: step 4/4. In terms of biological role, catalyzes the conversion of 4-hydroxy-tetrahydrodipicolinate (HTPA) to tetrahydrodipicolinate. This chain is 4-hydroxy-tetrahydrodipicolinate reductase, found in Synechocystis sp. (strain ATCC 27184 / PCC 6803 / Kazusa).